The chain runs to 258 residues: 1-(5-phosphoribosyl)-5-[(5-phosphoribosylamino)methylideneamino] imidazole-4-carboxamide isomerase (258 aa).

The active-site Proton acceptor is Asp17. Asp136 functions as the Proton donor in the catalytic mechanism.

It belongs to the HisA/HisF family.

It localises to the cytoplasm. It catalyses the reaction 1-(5-phospho-beta-D-ribosyl)-5-[(5-phospho-beta-D-ribosylamino)methylideneamino]imidazole-4-carboxamide = 5-[(5-phospho-1-deoxy-D-ribulos-1-ylimino)methylamino]-1-(5-phospho-beta-D-ribosyl)imidazole-4-carboxamide. The protein operates within amino-acid biosynthesis; L-histidine biosynthesis; L-histidine from 5-phospho-alpha-D-ribose 1-diphosphate: step 4/9. The protein is 1-(5-phosphoribosyl)-5-[(5-phosphoribosylamino)methylideneamino] imidazole-4-carboxamide isomerase of Corynebacterium jeikeium (strain K411).